A 295-amino-acid chain; its full sequence is Myosin light chain kinase A (295 aa).

One can recognise a Protein kinase domain in the interval 8-265 (YEFKEELGRG…ATNALNHPWL (258 aa)). Residues 14 to 22 (LGRGAFSIV) and lysine 37 contribute to the ATP site. Aspartate 130 (proton acceptor) is an active-site residue. 2 positions are modified to phosphothreonine: threonine 166 and threonine 289. Residues 264–295 (WLKSNNSNNTIDTVKMKEYIVERQKTQTKLVN) are autoinhibitory domain.

The protein belongs to the protein kinase superfamily. CAMK Ser/Thr protein kinase family. CaMK subfamily. In terms of processing, autophosphorylated. Transiently phosphorylated on Thr-166 and Thr-289. This phosphorylation is gbpC-dependent.

The enzyme catalyses L-seryl-[myosin light chain] + ATP = O-phospho-L-seryl-[myosin light chain] + ADP + H(+). The catalysed reaction is L-threonyl-[myosin light chain] + ATP = O-phospho-L-threonyl-[myosin light chain] + ADP + H(+). With respect to regulation, possesses an autoinhibitory domain. Autophosphorylation appears to increase the enzymatic activity. Activation is gbdC-dependent. Does not have a calmodulin-binding domain. Phosphorylates a specific serine in the N-terminus of a myosin light chain. Phosphorylates regulatory myosin light chain (mlcR) during chemotaxis. mlcR phosphorylation increases the motility and actin-activated ATPase activity of myosin, contributing to chemotaxis. The chain is Myosin light chain kinase A (mlkA) from Dictyostelium discoideum (Social amoeba).